The sequence spans 156 residues: MIILGLDPSLSCTGWGLIRVEGSRISHIANGQIKTDAKAALPDRLVHLDTALAAVIADHAPKCAAVEEVFVNDNPQSTLKLAHARGVVLLGCARGGLTVTQYAPRLVKKAIVGTGGAAKGQVQAMLGVLLPGTKVAGPDAADALAVAICHANHRRR.

Active-site residues include Asp-7, Glu-67, and Asp-139. Positions 7, 67, and 139 each coordinate Mg(2+).

This sequence belongs to the RuvC family. In terms of assembly, homodimer which binds Holliday junction (HJ) DNA. The HJ becomes 2-fold symmetrical on binding to RuvC with unstacked arms; it has a different conformation from HJ DNA in complex with RuvA. In the full resolvosome a probable DNA-RuvA(4)-RuvB(12)-RuvC(2) complex forms which resolves the HJ. Requires Mg(2+) as cofactor.

It localises to the cytoplasm. The catalysed reaction is Endonucleolytic cleavage at a junction such as a reciprocal single-stranded crossover between two homologous DNA duplexes (Holliday junction).. In terms of biological role, the RuvA-RuvB-RuvC complex processes Holliday junction (HJ) DNA during genetic recombination and DNA repair. Endonuclease that resolves HJ intermediates. Cleaves cruciform DNA by making single-stranded nicks across the HJ at symmetrical positions within the homologous arms, yielding a 5'-phosphate and a 3'-hydroxyl group; requires a central core of homology in the junction. The consensus cleavage sequence is 5'-(A/T)TT(C/G)-3'. Cleavage occurs on the 3'-side of the TT dinucleotide at the point of strand exchange. HJ branch migration catalyzed by RuvA-RuvB allows RuvC to scan DNA until it finds its consensus sequence, where it cleaves and resolves the cruciform DNA. In Sphingopyxis alaskensis (strain DSM 13593 / LMG 18877 / RB2256) (Sphingomonas alaskensis), this protein is Crossover junction endodeoxyribonuclease RuvC.